Consider the following 266-residue polypeptide: Glucosamine-6-phosphate deaminase (266 aa).

Catalysis depends on aspartate 72, which acts as the Proton acceptor; for enolization step. The active-site For ring-opening step is aspartate 141. Histidine 143 acts as the Proton acceptor; for ring-opening step in catalysis. Glutamate 148 acts as the For ring-opening step in catalysis.

It belongs to the glucosamine/galactosamine-6-phosphate isomerase family. NagB subfamily. In terms of assembly, homohexamer.

The enzyme catalyses alpha-D-glucosamine 6-phosphate + H2O = beta-D-fructose 6-phosphate + NH4(+). It functions in the pathway amino-sugar metabolism; N-acetylneuraminate degradation; D-fructose 6-phosphate from N-acetylneuraminate: step 5/5. Allosterically activated by N-acetylglucosamine 6-phosphate (GlcNAc6P). Catalyzes the reversible isomerization-deamination of glucosamine 6-phosphate (GlcN6P) to form fructose 6-phosphate (Fru6P) and ammonium ion. This Tolumonas auensis (strain DSM 9187 / NBRC 110442 / TA 4) protein is Glucosamine-6-phosphate deaminase.